Here is a 70-residue protein sequence, read N- to C-terminus: Cold shock-like protein CspJ (70 aa).

Residues Gly-7–Val-67 enclose the CSD domain.

Its subcellular location is the cytoplasm. The sequence is that of Cold shock-like protein CspJ (cspJ) from Salmonella typhimurium (strain SL1344).